The chain runs to 404 residues: Exodeoxyribonuclease 7 large subunit (404 aa).

Belongs to the XseA family. In terms of assembly, heterooligomer composed of large and small subunits.

The protein localises to the cytoplasm. It carries out the reaction Exonucleolytic cleavage in either 5'- to 3'- or 3'- to 5'-direction to yield nucleoside 5'-phosphates.. Functionally, bidirectionally degrades single-stranded DNA into large acid-insoluble oligonucleotides, which are then degraded further into small acid-soluble oligonucleotides. This chain is Exodeoxyribonuclease 7 large subunit, found in Ruminiclostridium cellulolyticum (strain ATCC 35319 / DSM 5812 / JCM 6584 / H10) (Clostridium cellulolyticum).